A 141-amino-acid polypeptide reads, in one-letter code: Lutropin subunit beta (141 aa).

A signal peptide spans 1-20 (MEMFQGLLLWLLLGVAGVWA). 6 disulfides stabilise this stretch: Cys-29-Cys-77, Cys-43-Cys-92, Cys-46-Cys-130, Cys-54-Cys-108, Cys-58-Cys-110, and Cys-113-Cys-120. The N-linked (GlcNAc...) asparagine glycan is linked to Asn-33.

The protein belongs to the glycoprotein hormones subunit beta family. As to quaternary structure, heterodimer of a common alpha chain and a unique beta chain which confers biological specificity to thyrotropin, lutropin, follitropin and gonadotropin.

The protein resides in the secreted. Its function is as follows. Promotes spermatogenesis and ovulation by stimulating the testes and ovaries to synthesize steroids. This is Lutropin subunit beta (LHB) from Bos taurus (Bovine).